The chain runs to 310 residues: p-hydroxybenzoic acid efflux pump subunit AaeA (310 aa).

The chain crosses the membrane as a helical span at residues 12–32 (AITVVLVILAFIAIFNAWVYY).

This sequence belongs to the membrane fusion protein (MFP) (TC 8.A.1) family.

Its subcellular location is the cell inner membrane. In terms of biological role, forms an efflux pump with AaeB. The chain is p-hydroxybenzoic acid efflux pump subunit AaeA from Escherichia coli O139:H28 (strain E24377A / ETEC).